Reading from the N-terminus, the 644-residue chain is uncharacterized protein (644 aa).

A disordered region spans residues 1-35 (MKANGLDNDPARTGMERTDIDSEHPEAQPLLNNNH). Residues 1-90 (MKANGLDNDP…ILNILILINT (90 aa)) are Cytoplasmic-facing. Residues 14–26 (GMERTDIDSEHPE) are compositionally biased toward basic and acidic residues. Phosphoserine occurs at positions 22, 56, and 63. A helical membrane pass occupies residues 91–111 (IWLVTTLISDFFFNINILFGF). At 112–122 (SNRYASFNDLT) the chain is on the vacuolar side. A helical transmembrane segment spans residues 123-143 (LIFISIIANSFNLWFNKLGLY). Residues 144–147 (SALD) lie on the Cytoplasmic side of the membrane. The chain crosses the membrane as a helical span at residues 148–168 (YSLNVTLCVLTLFNLALTYLI). Topologically, residues 169–174 (KYTRQR) are vacuolar. Residues 175–195 (IGFVGTFTYLWTSFSFFIGAI) form a helical membrane-spanning segment. Residues 196–271 (LDWYLLFYNN…EWVSIGFRNT (76 aa)) lie on the Cytoplasmic side of the membrane. The segment at 225-251 (NENHTNSTENRDRSQYGSGSPTPTHRS) is disordered. A compositionally biased stretch (polar residues) spans 239 to 251 (QYGSGSPTPTHRS). The residue at position 244 (Ser244) is a Phosphoserine. Residues 272 to 292 (IKFLILIFFALFTLNTLLTTL) traverse the membrane as a helical segment. Residues 293-644 (DTYRLTHKLP…IGELGKLTED (352 aa)) lie on the Vacuolar side of the membrane. The 272-residue stretch at 348-619 (PIILFEHGGY…IVEGGHEIYK (272 aa)) folds into the AB hydrolase-1 domain. Residues 469 to 492 (GRGDGDDGDDGNGNDGDGRNHDKT) form a disordered region.

It is found in the vacuole membrane. This is an uncharacterized protein from Saccharomyces cerevisiae (strain ATCC 204508 / S288c) (Baker's yeast).